The primary structure comprises 350 residues: NADH-quinone oxidoreductase subunit H (350 aa).

8 helical membrane passes run 5 to 25 (FIIE…IMAM), 76 to 96 (FLFV…SAVI), 118 to 138 (IALL…MIGG), 162 to 182 (IAMG…SLKV), 190 to 210 (MNWN…CSFA), 243 to 263 (LFAE…LFFG), 284 to 304 (LLGI…YMWV), and 319 to 339 (LGWR…GAVI).

This sequence belongs to the complex I subunit 1 family. NDH-1 is composed of 14 different subunits. Subunits NuoA, H, J, K, L, M, N constitute the membrane sector of the complex.

It localises to the cell inner membrane. It carries out the reaction a quinone + NADH + 5 H(+)(in) = a quinol + NAD(+) + 4 H(+)(out). NDH-1 shuttles electrons from NADH, via FMN and iron-sulfur (Fe-S) centers, to quinones in the respiratory chain. The immediate electron acceptor for the enzyme in this species is believed to be ubiquinone. Couples the redox reaction to proton translocation (for every two electrons transferred, four hydrogen ions are translocated across the cytoplasmic membrane), and thus conserves the redox energy in a proton gradient. This subunit may bind ubiquinone. This Flavobacterium johnsoniae (strain ATCC 17061 / DSM 2064 / JCM 8514 / BCRC 14874 / CCUG 350202 / NBRC 14942 / NCIMB 11054 / UW101) (Cytophaga johnsonae) protein is NADH-quinone oxidoreductase subunit H.